A 99-amino-acid polypeptide reads, in one-letter code: MAMAKKSVSSFTLIFILVLVIFEVPEIKAQDSECLKEYGGDVGFPFCAPRIFPTICYTRCRENKGAKGGRCIWGEGTNVKCLCDYCNDSPFDQILRGGI.

The N-terminal stretch at 1-30 (MAMAKKSVSSFTLIFILVLVIFEVPEIKAQ) is a signal peptide. Cystine bridges form between C34–C86, C47–C71, C56–C81, and C60–C83. A propeptide spanning residues 94-99 (ILRGGI) is cleaved from the precursor.

The protein belongs to the DEFL family. Protease inhibitor I18 (RTI/MTI-2) subfamily.

The protein localises to the secreted. Inhibits bovine beta-trypsin and alpha-chymotrypsin on a 1:1 molar basis. The protein is Defensin-like protein 2 of Sinapis alba (White mustard).